Here is a 404-residue protein sequence, read N- to C-terminus: Argininosuccinate synthase (404 aa).

Residues 12 to 20 (AYSGGLDTS) and A40 each bind ATP. Positions 92 and 97 each coordinate L-citrulline. ATP is bound at residue G122. L-aspartate is bound by residues T124, N128, and D129. N128 provides a ligand contact to L-citrulline. L-citrulline-binding residues include R132, S181, S190, E266, and Y278.

This sequence belongs to the argininosuccinate synthase family. Type 1 subfamily. Homotetramer.

The protein resides in the cytoplasm. It catalyses the reaction L-citrulline + L-aspartate + ATP = 2-(N(omega)-L-arginino)succinate + AMP + diphosphate + H(+). The protein operates within amino-acid biosynthesis; L-arginine biosynthesis; L-arginine from L-ornithine and carbamoyl phosphate: step 2/3. This is Argininosuccinate synthase from Photorhabdus laumondii subsp. laumondii (strain DSM 15139 / CIP 105565 / TT01) (Photorhabdus luminescens subsp. laumondii).